The following is a 105-amino-acid chain: Small ribosomal subunit protein uS10 (105 aa).

It belongs to the universal ribosomal protein uS10 family. Part of the 30S ribosomal subunit.

Functionally, involved in the binding of tRNA to the ribosomes. This Rickettsia canadensis (strain McKiel) protein is Small ribosomal subunit protein uS10.